We begin with the raw amino-acid sequence, 280 residues long: Uroporphyrinogen-III C-methyltransferase (280 aa).

S-adenosyl-L-homocysteine is bound by residues P24, 100–102, 130–131, M184, A213, and A241; these read GGD and TA.

This sequence belongs to the precorrin methyltransferase family. As to quaternary structure, homodimer.

It carries out the reaction uroporphyrinogen III + 2 S-adenosyl-L-methionine = precorrin-2 + 2 S-adenosyl-L-homocysteine + H(+). The enzyme catalyses uroporphyrinogen III + S-adenosyl-L-methionine = precorrin-1 + S-adenosyl-L-homocysteine + H(+). The catalysed reaction is precorrin-1 + S-adenosyl-L-methionine = precorrin-2 + S-adenosyl-L-homocysteine. The protein operates within cofactor biosynthesis; adenosylcobalamin biosynthesis; precorrin-2 from uroporphyrinogen III: step 1/1. It functions in the pathway porphyrin-containing compound metabolism; siroheme biosynthesis; precorrin-2 from uroporphyrinogen III: step 1/1. Its activity is regulated as follows. S-adenosylhomocysteine is an extremely powerful competitive inhibitor of the uroporphyrinogen III methylation. SUMT exhibits a substrate inhibition phenomenon at uroporphyrinogen III concentrations above 2 uM; this property might play a regulatory role in cobalamin biosynthesis. The enzyme activity is completely insensitive to feedback inhibition by cobalamin and corrinoid intermediates. In terms of biological role, catalyzes the two successive C-2 and C-7 methylation reactions involved in the conversion of uroporphyrinogen III to precorrin-2 via the intermediate formation of precorrin-1. It is a step in the biosynthesis of both cobalamin (vitamin B12) and siroheme. Neither uroporphyrin III nor the chlorin (factor I) is a substrate of SUMT. The protein is Uroporphyrinogen-III C-methyltransferase of Sinorhizobium sp.